The following is a 148-amino-acid chain: MMSVLVIVGCPEPPALIPSVLYLTNQLKKKGFNVIIAANPAALKLLEVADDDKYYLKGVGAVDIDGGLRGIEGINKIISFVHNDGGVSYTVTYKAKYNKPTYAIVFGRQINKDYVETLKNSNIGVYTARAFHNPMPIVNRIKEILANL.

This is an uncharacterized protein from Methanocaldococcus jannaschii (strain ATCC 43067 / DSM 2661 / JAL-1 / JCM 10045 / NBRC 100440) (Methanococcus jannaschii).